A 178-amino-acid chain; its full sequence is uncharacterized protein (178 aa).

Transmembrane regions (helical) follow at residues 3-23 (IPII…FISI), 56-76 (IFLM…NLIF), 101-121 (LILP…VAGF), and 150-170 (LSLI…YITP).

This sequence to M.jannaschii MJ0706 and Synechocystis PCC 6803 slr1478.

The protein localises to the cell membrane. This is an uncharacterized protein from Methanocaldococcus jannaschii (strain ATCC 43067 / DSM 2661 / JAL-1 / JCM 10045 / NBRC 100440) (Methanococcus jannaschii).